We begin with the raw amino-acid sequence, 108 residues long: Thiosulfate sulfurtransferase GlpE (108 aa).

Residues 18–106 (QNEDAVLVDI…WVRSELPIEL (89 aa)) enclose the Rhodanese domain. The Cysteine persulfide intermediate role is filled by cysteine 66.

It belongs to the GlpE family.

It is found in the cytoplasm. It catalyses the reaction thiosulfate + hydrogen cyanide = thiocyanate + sulfite + 2 H(+). The enzyme catalyses thiosulfate + [thioredoxin]-dithiol = [thioredoxin]-disulfide + hydrogen sulfide + sulfite + 2 H(+). In terms of biological role, transferase that catalyzes the transfer of sulfur from thiosulfate to thiophilic acceptors such as cyanide or dithiols. May function in a CysM-independent thiosulfate assimilation pathway by catalyzing the conversion of thiosulfate to sulfite, which can then be used for L-cysteine biosynthesis. The chain is Thiosulfate sulfurtransferase GlpE from Glaesserella parasuis serovar 5 (strain SH0165) (Haemophilus parasuis).